The chain runs to 236 residues: Proteasome subunit alpha (236 aa).

This sequence belongs to the peptidase T1A family. The 20S proteasome core is composed of 14 alpha and 14 beta subunits that assemble into four stacked heptameric rings, resulting in a barrel-shaped structure. The two inner rings, each composed of seven catalytic beta subunits, are sandwiched by two outer rings, each composed of seven alpha subunits. The catalytic chamber with the active sites is on the inside of the barrel. Has a gated structure, the ends of the cylinder being occluded by the N-termini of the alpha-subunits. Is capped by the proteasome-associated ATPase, ARC.

The protein localises to the cytoplasm. The protein operates within protein degradation; proteasomal Pup-dependent pathway. Its activity is regulated as follows. The formation of the proteasomal ATPase ARC-20S proteasome complex, likely via the docking of the C-termini of ARC into the intersubunit pockets in the alpha-rings, may trigger opening of the gate for substrate entry. Interconversion between the open-gate and close-gate conformations leads to a dynamic regulation of the 20S proteasome proteolysis activity. Component of the proteasome core, a large protease complex with broad specificity involved in protein degradation. This chain is Proteasome subunit alpha, found in Pseudarthrobacter chlorophenolicus (strain ATCC 700700 / DSM 12829 / CIP 107037 / JCM 12360 / KCTC 9906 / NCIMB 13794 / A6) (Arthrobacter chlorophenolicus).